We begin with the raw amino-acid sequence, 119 residues long: MNARGMTLLEVMVALAVFAIAGLAVMKTASEHLSALNYLEEKTLATWVVENQLVQQKLEAKWPGDSWVEGGEQMAGQTWYWRYRGVATADNNFKALDMEVRTAPKAESPVAFIRTYISR.

Residues 1 to 5 constitute a propeptide, leader sequence; sequence MNARG. Residue methionine 6 is modified to N-methylmethionine. The chain crosses the membrane as a helical span at residues 6–26; that stretch reads MTLLEVMVALAVFAIAGLAVM.

This sequence belongs to the GSP I family. As to quaternary structure, type II secretion is composed of four main components: the outer membrane complex, the inner membrane complex, the cytoplasmic secretion ATPase and the periplasm-spanning pseudopilus. Interacts with core component ExeG. Post-translationally, cleaved by prepilin peptidase. In terms of processing, methylated by prepilin peptidase at the amino group of the N-terminal methionine once the leader sequence is cleaved by prepilin peptidase.

Its subcellular location is the cell inner membrane. Its function is as follows. Component of the type II secretion system required for the energy-dependent secretion of extracellular factors such as proteases and toxins from the periplasm. Part of the pseudopilus tip complex that is critical for the recognition and binding of secretion substrates. This chain is Type II secretion system protein I (exeI), found in Aeromonas hydrophila.